A 205-amino-acid chain; its full sequence is Small ribosomal subunit protein uS4 (205 aa).

The tract at residues 18 to 49 (NIWGRPKSPVNKREYGPGQHGQRRKGKLSDFG) is disordered. The region spanning 94–157 (RRLDTVVYRA…KQLALVLEAN (64 aa)) is the S4 RNA-binding domain.

The protein belongs to the universal ribosomal protein uS4 family. In terms of assembly, part of the 30S ribosomal subunit. Contacts protein S5. The interaction surface between S4 and S5 is involved in control of translational fidelity.

One of the primary rRNA binding proteins, it binds directly to 16S rRNA where it nucleates assembly of the body of the 30S subunit. Functionally, with S5 and S12 plays an important role in translational accuracy. The chain is Small ribosomal subunit protein uS4 from Nitrobacter hamburgensis (strain DSM 10229 / NCIMB 13809 / X14).